Reading from the N-terminus, the 511-residue chain is Pancreatic alpha-amylase (511 aa).

A signal peptide spans 1–15; sequence MKLFLLLSAFGFCWA. Residue Gln-16 is modified to Pyrrolidone carboxylic acid. Cystine bridges form between Cys-43/Cys-101, Cys-85/Cys-130, and Cys-156/Cys-175. Ca(2+) contacts are provided by Asn-115, Arg-173, and Asp-182. Position 210 (Arg-210) interacts with chloride. Residue Asp-212 is the Nucleophile of the active site. His-216 is a binding site for Ca(2+). Catalysis depends on Glu-248, which acts as the Proton donor. Chloride is bound by residues Asn-313 and Arg-352. A disulfide bond links Cys-393 and Cys-399. Residue Asn-427 is glycosylated (N-linked (GlcNAc...) asparagine). An intrachain disulfide couples Cys-465 to Cys-477.

It belongs to the glycosyl hydrolase 13 family. Binds to the sea anemone inhibitor helianthamide and magnificamide. Ca(2+) serves as cofactor. Requires chloride as cofactor.

The protein localises to the secreted. It is found in the extracellular space. It catalyses the reaction Endohydrolysis of (1-&gt;4)-alpha-D-glucosidic linkages in polysaccharides containing three or more (1-&gt;4)-alpha-linked D-glucose units.. The sequence is that of Pancreatic alpha-amylase (AMY2) from Sus scrofa (Pig).